Reading from the N-terminus, the 156-residue chain is Putative pre-16S rRNA nuclease (156 aa).

It belongs to the YqgF nuclease family.

Its subcellular location is the cytoplasm. Could be a nuclease involved in processing of the 5'-end of pre-16S rRNA. In Ehrlichia ruminantium (strain Welgevonden), this protein is Putative pre-16S rRNA nuclease.